Reading from the N-terminus, the 294-residue chain is Osteopontin (294 aa).

A signal peptide spans Met1–Ser16. 13 positions are modified to phosphoserine: Ser24, Ser26, Ser27, Ser61, Ser62, Ser75, Ser77, Ser80, Ser106, Ser109, Ser112, Ser115, and Ser118. The interval Trp42–Asp274 is disordered. The span at Ser48–Ser61 shows a compositional bias: polar residues. The segment covering Asp85–Asp110 has biased composition (acidic residues). Positions Thr121–Thr130 are enriched in polar residues. 3 O-linked (GalNAc...) threonine glycosylation sites follow: Thr123, Thr132, and Thr137. Positions Arg144–Asp146 match the Cell attachment site motif. A phosphothreonine mark is found at Thr170 and Thr175. Residues Leu174 to Leu187 show a composition bias toward basic and acidic residues. 6 positions are modified to phosphoserine: Ser176, Ser180, Ser200, Ser209, Ser213, and Ser219. The segment covering Ser197–Asp216 has biased composition (polar residues). The O-linked (Xyl...) (chondroitin sulfate) serine glycan is linked to Ser219. Basic and acidic residues predominate over residues Leu220–Gln232. Phosphothreonine is present on Thr222. 14 positions are modified to phosphoserine: Ser228, Ser231, Ser234, Ser238, Ser243, Ser247, Ser250, Ser255, Ser260, Ser271, Ser283, Ser288, Ser290, and Ser291. Positions Ser234 to Ala249 are enriched in polar residues. Positions Asp263 to Asp274 are enriched in basic and acidic residues. An O-linked (Xyl...) (chondroitin sulfate) serine glycan is attached at Ser288.

This sequence belongs to the osteopontin family. In terms of assembly, interacts (via N-terminus) with integrin ITGA9:ITGB1. Extensively phosphorylated by FAM20C in the extracellular medium at multiple sites within the S-x-E/pS motif. The phosphorylated form inhibits hydroxyapatite crystallization. Dephosphorylation via a mechanism involving ALPL/TNAP promotes hydroxyapatite crystallization. In terms of processing, O-glycosylated. Post-translationally, forms covalent cross-links mediated by transglutaminase TGM2, between a glutamine and the epsilon-amino group of a lysine residue, forming homopolymers and heteropolymers, increasing its collagen binding properties.

It localises to the secreted. In terms of biological role, major non-collagenous bone protein that binds tightly to hydroxyapatite. Appears to form an integral part of the mineralized matrix. Probably important to cell-matrix interaction. Functionally, acts as a cytokine involved in enhancing production of interferon-gamma and interleukin-12 and reducing production of interleukin-10 and is essential in the pathway that leads to type I immunity. The chain is Osteopontin (Spp1) from Mus musculus (Mouse).